The primary structure comprises 538 residues: Phosphoenolpyruvate carboxykinase (ATP) (538 aa).

3 residues coordinate substrate: arginine 61, tyrosine 195, and lysine 201. ATP is bound by residues lysine 201, histidine 220, and 236–244; that span reads GLSGTGKTT. Mn(2+) is bound by residues lysine 201 and histidine 220. Position 257 (aspartate 257) interacts with Mn(2+). ATP is bound by residues glutamate 285, arginine 323, and threonine 449. Arginine 323 contributes to the substrate binding site.

The protein belongs to the phosphoenolpyruvate carboxykinase (ATP) family. The cofactor is Mn(2+).

The protein localises to the cytoplasm. The catalysed reaction is oxaloacetate + ATP = phosphoenolpyruvate + ADP + CO2. It participates in carbohydrate biosynthesis; gluconeogenesis. Its function is as follows. Involved in the gluconeogenesis. Catalyzes the conversion of oxaloacetate (OAA) to phosphoenolpyruvate (PEP) through direct phosphoryl transfer between the nucleoside triphosphate and OAA. The protein is Phosphoenolpyruvate carboxykinase (ATP) of Nitrobacter winogradskyi (strain ATCC 25391 / DSM 10237 / CIP 104748 / NCIMB 11846 / Nb-255).